A 428-amino-acid chain; its full sequence is Adenylosuccinate synthetase (428 aa).

Residues 12-18 (GDEGKGK) and 40-42 (GHT) each bind GTP. Asp-13 functions as the Proton acceptor in the catalytic mechanism. Asp-13 and Gly-40 together coordinate Mg(2+). IMP contacts are provided by residues 13–16 (DEGK), 38–41 (NAGH), Thr-130, Arg-144, Gln-225, Thr-240, and Arg-304. His-41 functions as the Proton donor in the catalytic mechanism. 300 to 306 (TTTGRPR) is a substrate binding site. GTP-binding positions include Arg-306, 332–334 (KLD), and 414–416 (SVG).

The protein belongs to the adenylosuccinate synthetase family. As to quaternary structure, homodimer. Mg(2+) is required as a cofactor.

Its subcellular location is the cytoplasm. The catalysed reaction is IMP + L-aspartate + GTP = N(6)-(1,2-dicarboxyethyl)-AMP + GDP + phosphate + 2 H(+). It functions in the pathway purine metabolism; AMP biosynthesis via de novo pathway; AMP from IMP: step 1/2. Plays an important role in the de novo pathway of purine nucleotide biosynthesis. Catalyzes the first committed step in the biosynthesis of AMP from IMP. This is Adenylosuccinate synthetase from Caldanaerobacter subterraneus subsp. tengcongensis (strain DSM 15242 / JCM 11007 / NBRC 100824 / MB4) (Thermoanaerobacter tengcongensis).